A 429-amino-acid polypeptide reads, in one-letter code: Enolase (429 aa).

Residue Q163 coordinates (2R)-2-phosphoglycerate. E205 serves as the catalytic Proton donor. Mg(2+)-binding residues include D242, E286, and D313. (2R)-2-phosphoglycerate-binding residues include K338, R367, S368, and K389. The active-site Proton acceptor is the K338.

This sequence belongs to the enolase family. Requires Mg(2+) as cofactor.

Its subcellular location is the cytoplasm. The protein resides in the secreted. It is found in the cell surface. The catalysed reaction is (2R)-2-phosphoglycerate = phosphoenolpyruvate + H2O. It functions in the pathway carbohydrate degradation; glycolysis; pyruvate from D-glyceraldehyde 3-phosphate: step 4/5. In terms of biological role, catalyzes the reversible conversion of 2-phosphoglycerate (2-PG) into phosphoenolpyruvate (PEP). It is essential for the degradation of carbohydrates via glycolysis. The protein is Enolase of Thermoanaerobacter sp. (strain X514).